Reading from the N-terminus, the 181-residue chain is ATP-dependent protease subunit HslV (181 aa).

The active site involves Thr-8. Residues Gly-165, Cys-168, and Thr-171 each coordinate Na(+).

This sequence belongs to the peptidase T1B family. HslV subfamily. A double ring-shaped homohexamer of HslV is capped on each side by a ring-shaped HslU homohexamer. The assembly of the HslU/HslV complex is dependent on binding of ATP.

It is found in the cytoplasm. It carries out the reaction ATP-dependent cleavage of peptide bonds with broad specificity.. Its activity is regulated as follows. Allosterically activated by HslU binding. Its function is as follows. Protease subunit of a proteasome-like degradation complex believed to be a general protein degrading machinery. This is ATP-dependent protease subunit HslV from Oceanobacillus iheyensis (strain DSM 14371 / CIP 107618 / JCM 11309 / KCTC 3954 / HTE831).